We begin with the raw amino-acid sequence, 505 residues long: uncharacterized protein (505 aa).

Residues 11–27 (IGIIGGGIVGWLAAIAL) form a helical membrane-spanning segment.

It localises to the membrane. This is an uncharacterized protein from Sinorhizobium fredii (strain NBRC 101917 / NGR234).